The sequence spans 230 residues: Cytidylate kinase (230 aa).

12-20 serves as a coordination point for ATP; the sequence is GPSGAGKGT.

The protein belongs to the cytidylate kinase family. Type 1 subfamily.

It is found in the cytoplasm. It carries out the reaction CMP + ATP = CDP + ADP. It catalyses the reaction dCMP + ATP = dCDP + ADP. The sequence is that of Cytidylate kinase from Shewanella sp. (strain MR-7).